Here is a 609-residue protein sequence, read N- to C-terminus: Dynamin-like protein 2 (609 aa).

An inserts into assembly domain of DLP1, required for tetramerization region spans residues 1–16 (MQINLLNDFIKAYENT). Positions 17–25 (YSVSFDDSF) are linker. Positions 63–310 (NIAIIGQFSS…FVGIFDRLLN (248 aa)) constitute a Dynamin-type G domain. The G1 motif stretch occupies residues 68 to 75 (GQFSSGKS). 72-76 (SGKSS) serves as a coordination point for GDP. The tract at residues 93–95 (PVT) is G2 motif. Residues 158 to 161 (DTPG) form a G3 motif region. The tract at residues 216–219 (NQKD) is G4 motif.

This sequence belongs to the TRAFAC class dynamin-like GTPase superfamily. Dynamin/Fzo/YdjA family. In terms of assembly, forms a 2:2 heterotetramer with DLP1. DLP2 forms a central back-to-back dimer flanked on each side by a DLP1 subunit. In the crystal structures the 2 DLP1 subunits are in very different conformations.

It is found in the cytoplasm. It localises to the cytosol. The enzyme catalyses GTP + H2O = GDP + phosphate + H(+). Its function is as follows. The heterotetrameric DLP1(2)-DLP2(2) complex tethers liposomes and may mediate their fusion. Initial binding is probably mediated by DLP1, while DLP2 couples DLP1 subunits and increases the effective reach of the complex up to 45 nm. The role of the nucleotide is unknown. This subunit alone very weakly binds to liposomes; GTP, GDP, GMPPCP and GMPPNP do not change heterotetramer binding. Tetramerization is required for GTPase activity, suggesting the GTPase domains (dynamin-type G) from DLP1 and DLP2 must dimerize to reconstitute the GTPase active site. This Campylobacter jejuni subsp. jejuni serotype O:23/36 (strain 81-176) protein is Dynamin-like protein 2.